An 88-amino-acid chain; its full sequence is Sec-independent protein translocase protein TatA (88 aa).

Residues 1 to 21 (MGGISIWQLLIIALIVVLLFG) traverse the membrane as a helical segment. Residues 43–88 (MSSEEDKKALEDAEAAKPVQTAQTVQSAQPTQQATEKKPESNKEQA) form a disordered region. The span at 46–57 (EEDKKALEDAEA) shows a compositional bias: basic and acidic residues. The span at 62-76 (QTAQTVQSAQPTQQA) shows a compositional bias: polar residues. Over residues 77-88 (TEKKPESNKEQA) the composition is skewed to basic and acidic residues.

Belongs to the TatA/E family. In terms of assembly, the Tat system comprises two distinct complexes: a TatABC complex, containing multiple copies of TatA, TatB and TatC subunits, and a separate TatA complex, containing only TatA subunits. Substrates initially bind to the TatABC complex, which probably triggers association of the separate TatA complex to form the active translocon.

It is found in the cell inner membrane. Functionally, part of the twin-arginine translocation (Tat) system that transports large folded proteins containing a characteristic twin-arginine motif in their signal peptide across membranes. TatA could form the protein-conducting channel of the Tat system. In Shewanella oneidensis (strain ATCC 700550 / JCM 31522 / CIP 106686 / LMG 19005 / NCIMB 14063 / MR-1), this protein is Sec-independent protein translocase protein TatA.